A 414-amino-acid polypeptide reads, in one-letter code: MTSAVGISVPNTDAQSSQSASQTTVEQEVLKSKVNLLGMSRIELEQFFEQIGEKKFRAGQIMKWIHQYFVTDLAEMTNISGKLRTKLEQVCEIKAPEVVHRHYSKDGTRKWVFRVGEGSGSLVETVLIPAEDKTGSRKTLCISSQVGCALDCSFCSTGKQGFQRDLTPAEIIGQLWVANQSYVEDVPVAERTRAVTNVVMMGMGEPLLNFKPVVHSMSIMLDDYAYGMSKRRVTLSTSGVVPMIDKLAEELDVALAISLHAPNNPLRDELVPINKKYPLEQLIAAAQRYITKDGNESARKHVTIEYVMLDGVNDHPEHAQQLVKLLKNLPSKINLIPFNPFPHAPYGRSSRNRIMAFQKTLSDAGFVCTIRQTRGDDIDAACGQLVGQVADRTRRAEQWKKKVAERQEIIRSQG.

Residues 1 to 13 show a composition bias toward polar residues; that stretch reads MTSAVGISVPNTD. Positions 1-22 are disordered; that stretch reads MTSAVGISVPNTDAQSSQSASQ. The Proton acceptor role is filled by Glu-124. The Radical SAM core domain maps to 134–377; it reads TGSRKTLCIS…CTIRQTRGDD (244 aa). Cys-141 and Cys-382 are joined by a disulfide. Residues Cys-148, Cys-152, and Cys-155 each coordinate [4Fe-4S] cluster. S-adenosyl-L-methionine-binding positions include 204–205, Ser-236, 258–260, and Asn-339; these read GE and SLH. Residue Cys-382 is the S-methylcysteine intermediate of the active site.

It belongs to the radical SAM superfamily. RlmN family. The cofactor is [4Fe-4S] cluster.

Its subcellular location is the cytoplasm. The enzyme catalyses adenosine(2503) in 23S rRNA + 2 reduced [2Fe-2S]-[ferredoxin] + 2 S-adenosyl-L-methionine = 2-methyladenosine(2503) in 23S rRNA + 5'-deoxyadenosine + L-methionine + 2 oxidized [2Fe-2S]-[ferredoxin] + S-adenosyl-L-homocysteine. It catalyses the reaction adenosine(37) in tRNA + 2 reduced [2Fe-2S]-[ferredoxin] + 2 S-adenosyl-L-methionine = 2-methyladenosine(37) in tRNA + 5'-deoxyadenosine + L-methionine + 2 oxidized [2Fe-2S]-[ferredoxin] + S-adenosyl-L-homocysteine. Its function is as follows. Specifically methylates position 2 of adenine 2503 in 23S rRNA and position 2 of adenine 37 in tRNAs. m2A2503 modification seems to play a crucial role in the proofreading step occurring at the peptidyl transferase center and thus would serve to optimize ribosomal fidelity. The chain is Dual-specificity RNA methyltransferase RlmN from Acinetobacter baylyi (strain ATCC 33305 / BD413 / ADP1).